Here is a 179-residue protein sequence, read N- to C-terminus: Plasmid-derived single-stranded DNA-binding protein (179 aa).

Positions 6-110 (INKVILVGRL…ILVKTTGTMQ (105 aa)) constitute an SSB domain. The DNA-binding element occupies 55–61 (WHRVVLF). Residues 117-179 (GAQTQPEEGQ…DYGFSDDIPF (63 aa)) are disordered. Over residues 118–132 (AQTQPEEGQQFSGQP) the composition is skewed to polar residues. The span at 145 to 155 (GGAKTKGRGRK) shows a compositional bias: basic residues. A compositionally biased stretch (acidic residues) spans 167–179 (EGDDYGFSDDIPF).

Homotetramer.

Its function is as follows. May contribute to the conjugative processing of DNA. It has a functional relationship with Psi (plasmid-mediated sos inhibition) proteins. This chain is Plasmid-derived single-stranded DNA-binding protein (ssbF), found in Escherichia coli (strain K12).